The primary structure comprises 345 residues: Methylthioribose-1-phosphate isomerase (345 aa).

Substrate contacts are provided by residues 47 to 49, arginine 90, and glutamine 199; that span reads RGA. Aspartate 240 (proton donor) is an active-site residue. 250-251 contributes to the substrate binding site; that stretch reads NK.

The protein belongs to the eIF-2B alpha/beta/delta subunits family. MtnA subfamily.

It carries out the reaction 5-(methylsulfanyl)-alpha-D-ribose 1-phosphate = 5-(methylsulfanyl)-D-ribulose 1-phosphate. Its pathway is amino-acid biosynthesis; L-methionine biosynthesis via salvage pathway; L-methionine from S-methyl-5-thio-alpha-D-ribose 1-phosphate: step 1/6. In terms of biological role, catalyzes the interconversion of methylthioribose-1-phosphate (MTR-1-P) into methylthioribulose-1-phosphate (MTRu-1-P). This is Methylthioribose-1-phosphate isomerase from Crocosphaera subtropica (strain ATCC 51142 / BH68) (Cyanothece sp. (strain ATCC 51142)).